The primary structure comprises 386 residues: MSVRLQLGQLNESQARARLRETRRWVIKIGSALLTNDGRGLALDAMGLWVDQLAALRKDGVEVVIVSSGAVAEGMSRLGWRERPKLLDELQAAAAVGQMGLVQAWEAQFKRHGMQTAQILLTHEDLSDRKRYLNARGALCTLIDMGVAPIINENDTVVTDEIRFGDNDTLAALVANLVEADHLIILTDQSGLFDKDPRSNTDACLVGVAKANDTALDSMASGSSGALGRGGMFTKLRASRLASRSGAATVIVGGRIDSVLTRLRNGDELGTLLLPDQERWVARKQWLAGHLKTRGRLVLDDGAVRVLTQQGRSLLPVGVKSVDGGFQRGEMVSCYDLQGNEVARGLVNYDADEAVRIVGVASEKIESILGYINEPELIHRDNLVML.

Residue Lys28 participates in ATP binding. Substrate-binding residues include Ser68, Asp155, and Asn167. 187–188 (TD) contributes to the ATP binding site. The PUA domain maps to 294–372 (RGRLVLDDGA…EKIESILGYI (79 aa)).

The protein belongs to the glutamate 5-kinase family.

The protein localises to the cytoplasm. It catalyses the reaction L-glutamate + ATP = L-glutamyl 5-phosphate + ADP. The protein operates within amino-acid biosynthesis; L-proline biosynthesis; L-glutamate 5-semialdehyde from L-glutamate: step 1/2. Functionally, catalyzes the transfer of a phosphate group to glutamate to form L-glutamate 5-phosphate. The sequence is that of Glutamate 5-kinase from Hahella chejuensis (strain KCTC 2396).